The primary structure comprises 199 residues: Outer-membrane lipoprotein LolB (199 aa).

The N-terminal stretch at 1-28 is a signal peptide; sequence MSACPAPRSPVRWLHAFTLFLLLAVLAG. C29 carries N-palmitoyl cysteine lipidation. C29 is lipidated: S-diacylglycerol cysteine.

It belongs to the LolB family. Monomer.

It is found in the cell outer membrane. In terms of biological role, plays a critical role in the incorporation of lipoproteins in the outer membrane after they are released by the LolA protein. This is Outer-membrane lipoprotein LolB from Bordetella pertussis (strain Tohama I / ATCC BAA-589 / NCTC 13251).